Here is a 322-residue protein sequence, read N- to C-terminus: Rhomboid-like protein 16, chloroplastic (322 aa).

Residues 1-52 (MHAIFCRRVAVGCSSPQLTKLVTKQASQSRHSLSHLLPFDLSSRFVPPYVVS) constitute a chloroplast transit peptide. The next 6 membrane-spanning stretches (helical) occupy residues 110–130 (WING…AVFT), 166–186 (FSHV…YFGA), 201–221 (YFAG…LSVI), 238–258 (IGKL…MLLY), 265–285 (FGLM…LNII), and 295–315 (TLTS…WARI).

It belongs to the peptidase S54 family.

The protein resides in the plastid. The protein localises to the chloroplast membrane. In terms of biological role, rhomboid-type serine protease that catalyzes intramembrane proteolysis. May cleave the plastid translocon component Tic40. The chain is Rhomboid-like protein 16, chloroplastic from Arabidopsis thaliana (Mouse-ear cress).